A 364-amino-acid chain; its full sequence is Long-wave-sensitive opsin 1 (364 aa).

Residues 1–52 (MTQRWGPQRLAGGQPHAGLEDSTRASIFTYTNSNATRGPFEGPNYHIAPRWV) lie on the Extracellular side of the membrane. An O-linked (GlcNAc) serine glycan is attached at serine 22. A glycan (N-linked (GlcNAc...) asparagine) is linked at asparagine 34. A helical membrane pass occupies residues 53–77 (YHVTSAWMIFVVIASVFTNGLVLAA). Residues 78 to 89 (TMKFKKLRHPLN) are Cytoplasmic-facing. Residues 90–115 (WILVNLAVADLAETIIASTISVVNQI) form a helical membrane-spanning segment. The Extracellular segment spans residues 116 to 129 (YGYFVLGHPMCVLE). Cysteine 126 and cysteine 203 are disulfide-bonded. Residues 130 to 149 (GYTVSLCGITGLWSLAIISW) traverse the membrane as a helical segment. Residues 150 to 168 (ERWLVVCKPFGNVRFDAKL) lie on the Cytoplasmic side of the membrane. A helical transmembrane segment spans residues 169-192 (AIAGIAFSWIWAAVWTAPPIFGWS). The Extracellular segment spans residues 193–218 (RYWPHGLKTSCGPDVFSGSSYPGVQS). The chain crosses the membrane as a helical span at residues 219-246 (YMIVLMITCCIIPLSVIVLCYLQVWLAI). The Cytoplasmic portion of the chain corresponds to 247–268 (RAVAKQQKESESTQKAEKEVTR). A helical transmembrane segment spans residues 269 to 292 (MVMVMIFAYCVCWGPYTFFACFAA). Residues 293–300 (AHPGYAFH) are Extracellular-facing. A helical transmembrane segment spans residues 301-325 (PLVAALPAYFAKSATIYNPIIYVFM). Lysine 312 carries the post-translational modification N6-(retinylidene)lysine. The Cytoplasmic portion of the chain corresponds to 326–364 (NRQFRNCIMQLFGKKVDDGSELSSASRTEASSVSSVSPA).

The protein belongs to the G-protein coupled receptor 1 family. Opsin subfamily. Phosphorylated on some or all of the serine and threonine residues present in the C-terminal region. In terms of tissue distribution, the three color pigments are found in the cone photoreceptor cells. Expressed in retina.

It localises to the membrane. Functionally, visual pigments are the light-absorbing molecules that mediate vision. They consist of an apoprotein, opsin, covalently linked to cis-retinal. This chain is Long-wave-sensitive opsin 1 (OPN1LW), found in Felis catus (Cat).